The following is a 603-amino-acid chain: Probable methyltransferase PMT4 (603 aa).

The Cytoplasmic segment spans residues 1–12 (MKVASVIGLRPR). A helical; Signal-anchor for type II membrane protein transmembrane segment spans residues 13-33 (ISGLLFLTLGVIALITILVPN). Residues 34–603 (SDSSSTTSTT…LVCQKPLLKK (570 aa)) lie on the Lumenal side of the membrane. 2 N-linked (GlcNAc...) asparagine glycosylation sites follow: Asn96 and Asn393.

Belongs to the methyltransferase superfamily.

The protein resides in the endoplasmic reticulum membrane. This Arabidopsis thaliana (Mouse-ear cress) protein is Probable methyltransferase PMT4.